The primary structure comprises 1274 residues: Meiosis inhibitor protein 1 (1274 aa).

As to expression, expressed predominantly in testis. Weakly expressed in spleen and thymus. Expressed in the ovaries, Fallopian tubes and uterus.

Required for normal meiotic chromosome synapsis. May be involved in the formation of meiotic double-strand breaks (DSBs) in spermatocytes. The polypeptide is Meiosis inhibitor protein 1 (Homo sapiens (Human)).